The sequence spans 298 residues: Serine/threonine-protein kinase 1 (298 aa).

A Protein kinase domain is found at 38–276; that stretch reads FIATRPMFEG…FKSLVSHPWF (239 aa). Residues 45-53 and lysine 65 contribute to the ATP site; that span reads FEGGRNNVF. Aspartate 152 functions as the Proton acceptor in the catalytic mechanism.

Belongs to the protein kinase superfamily. Ser/Thr protein kinase family.

It localises to the virion. It is found in the host cytoplasm. The enzyme catalyses L-seryl-[protein] + ATP = O-phospho-L-seryl-[protein] + ADP + H(+). It catalyses the reaction L-threonyl-[protein] + ATP = O-phospho-L-threonyl-[protein] + ADP + H(+). Its function is as follows. Essential for viral replication. It may mediate the virus progression through DNA replication. This is Serine/threonine-protein kinase 1 from African swine fever virus (strain Badajoz 1971 Vero-adapted) (Ba71V).